A 400-amino-acid polypeptide reads, in one-letter code: MIIKPKIRGFICTTTHPVGCEANVKEQIAYTKAQGPIKNAPKRVLVVGASSGYGLSSRIAAAFGGGAATIGVFFEKEGSEKKPGTAGFYNAAAFEKLAREEGLYAKSLNGDAFSNEAKQKTIDLIKEDLGQVDMVVYSLASPVRKLPETGELIRSALKPIGQTYTSTAVDTNKDIIIEASVEPATEQEIQDTVTVMGGEDWELWINALAEAGVLAEGCKTVAYSYIGTELTWPIYWDGALGKAKMDLDRAASALNDKLSATGGSANVAVLKSVVTQASSAIPVMPLYIAMVFKKMREEGVHEGCMEQIYRMFSQRLYKEDGSAAEVDEKNRLRLDDWELRDDIQEHCRNLWPQITTENLKELTDYVEYKEEFLKLFGFGIDGVDYEADVNPDVATDFIAI.

NAD(+) contacts are provided by residues 48–53 (GASSGY), 74–75 (FE), 111–112 (DA), and 139–140 (LA). A substrate-binding site is contributed by tyrosine 225. Residue tyrosine 235 is the Proton donor of the active site. NAD(+) is bound by residues lysine 244 and 273–275 (VVT).

It belongs to the TER reductase family. Monomer.

It carries out the reaction a 2,3-saturated acyl-[ACP] + NAD(+) = a (2E)-enoyl-[ACP] + NADH + H(+). It functions in the pathway lipid metabolism; fatty acid biosynthesis. Functionally, involved in the final reduction of the elongation cycle of fatty acid synthesis (FAS II). Catalyzes the reduction of a carbon-carbon double bond in an enoyl moiety that is covalently linked to an acyl carrier protein (ACP). The polypeptide is Enoyl-[acyl-carrier-protein] reductase [NADH] 1 (Vibrio vulnificus (strain YJ016)).